Here is a 102-residue protein sequence, read N- to C-terminus: ATP-dependent Clp protease adapter protein ClpS (102 aa).

This sequence belongs to the ClpS family. As to quaternary structure, binds to the N-terminal domain of the chaperone ClpA.

In terms of biological role, involved in the modulation of the specificity of the ClpAP-mediated ATP-dependent protein degradation. In Shewanella sediminis (strain HAW-EB3), this protein is ATP-dependent Clp protease adapter protein ClpS.